The sequence spans 535 residues: uncharacterized protein (535 aa).

WD repeat units follow at residues 189 to 226 (RDDF…TRVL), 228 to 267 (ESIY…PRIS), 269 to 314 (HHPG…AVLV), 320 to 359 (AHDE…QPLY), 362 to 404 (QQNA…KIDE), and 462 to 505 (VHSV…SWHN).

The protein belongs to the WD repeat CDC20/Fizzy family.

This is an uncharacterized protein from Schizosaccharomyces pombe (strain 972 / ATCC 24843) (Fission yeast).